The sequence spans 229 residues: Putative N-acetylmannosamine-6-phosphate 2-epimerase (229 aa).

The protein belongs to the NanE family.

The catalysed reaction is an N-acyl-D-glucosamine 6-phosphate = an N-acyl-D-mannosamine 6-phosphate. Its pathway is amino-sugar metabolism; N-acetylneuraminate degradation; D-fructose 6-phosphate from N-acetylneuraminate: step 3/5. In terms of biological role, converts N-acetylmannosamine-6-phosphate (ManNAc-6-P) to N-acetylglucosamine-6-phosphate (GlcNAc-6-P). The sequence is that of Putative N-acetylmannosamine-6-phosphate 2-epimerase from Shigella flexneri serotype 5b (strain 8401).